Here is a 345-residue protein sequence, read N- to C-terminus: MTDKTSLSYKDAGVDIDAGNALVDRIKGVVKKTRRPEVMGGLGGFGALCALPQKYREPVLVSGTDGVGTKLRLAMDLKRHDTIGIDLVAMCVNDLVVQGAEPLFFLDYYATGKLDVDTAASVINGIAEGCLQSGCALVGGETAEMPGMYHGEDYDVAGFCVGVVEKSEIIDGSKVADGDVLVALASSGPHSNGYSLVRKIIEVSGVDPQTTDLDGKPLADHLLAPTRIYVKSVLDLIASVDVHAIAHLTGGGFWENIPRVLPDNTQAIIDESSWQWPSVFNWLQTAGNVSQHEMYRTFNCGVGMVIALPAAEADKAIALLNEKGENAWKIGYIKASDSEQRVVIA.

This sequence belongs to the AIR synthase family.

Its subcellular location is the cytoplasm. It carries out the reaction 2-formamido-N(1)-(5-O-phospho-beta-D-ribosyl)acetamidine + ATP = 5-amino-1-(5-phospho-beta-D-ribosyl)imidazole + ADP + phosphate + H(+). It functions in the pathway purine metabolism; IMP biosynthesis via de novo pathway; 5-amino-1-(5-phospho-D-ribosyl)imidazole from N(2)-formyl-N(1)-(5-phospho-D-ribosyl)glycinamide: step 2/2. This Klebsiella pneumoniae (strain 342) protein is Phosphoribosylformylglycinamidine cyclo-ligase.